The chain runs to 608 residues: DNA mismatch repair protein MutL (608 aa).

This sequence belongs to the DNA mismatch repair MutL/HexB family.

This protein is involved in the repair of mismatches in DNA. It is required for dam-dependent methyl-directed DNA mismatch repair. May act as a 'molecular matchmaker', a protein that promotes the formation of a stable complex between two or more DNA-binding proteins in an ATP-dependent manner without itself being part of a final effector complex. This Anaeromyxobacter dehalogenans (strain 2CP-C) protein is DNA mismatch repair protein MutL.